We begin with the raw amino-acid sequence, 95 residues long: Small ribosomal subunit protein uS19 (95 aa).

Belongs to the universal ribosomal protein uS19 family.

Its function is as follows. Protein S19 forms a complex with S13 that binds strongly to the 16S ribosomal RNA. In Roseiflexus castenholzii (strain DSM 13941 / HLO8), this protein is Small ribosomal subunit protein uS19.